The following is a 223-amino-acid chain: Holliday junction branch migration complex subunit RuvA (223 aa).

The segment at M1–L64 is domain I. The interval S65–D143 is domain II. The segment at D144–R171 is flexible linker. Residues D148–Q177 are disordered. The segment at P172 to E223 is domain III.

It belongs to the RuvA family. Homotetramer. Forms an RuvA(8)-RuvB(12)-Holliday junction (HJ) complex. HJ DNA is sandwiched between 2 RuvA tetramers; dsDNA enters through RuvA and exits via RuvB. An RuvB hexamer assembles on each DNA strand where it exits the tetramer. Each RuvB hexamer is contacted by two RuvA subunits (via domain III) on 2 adjacent RuvB subunits; this complex drives branch migration. In the full resolvosome a probable DNA-RuvA(4)-RuvB(12)-RuvC(2) complex forms which resolves the HJ.

Its subcellular location is the cytoplasm. Functionally, the RuvA-RuvB-RuvC complex processes Holliday junction (HJ) DNA during genetic recombination and DNA repair, while the RuvA-RuvB complex plays an important role in the rescue of blocked DNA replication forks via replication fork reversal (RFR). RuvA specifically binds to HJ cruciform DNA, conferring on it an open structure. The RuvB hexamer acts as an ATP-dependent pump, pulling dsDNA into and through the RuvAB complex. HJ branch migration allows RuvC to scan DNA until it finds its consensus sequence, where it cleaves and resolves the cruciform DNA. The polypeptide is Holliday junction branch migration complex subunit RuvA (Jannaschia sp. (strain CCS1)).